A 375-amino-acid chain; its full sequence is Filamin-binding LIM protein 1 (375 aa).

A filamin-binding region spans residues 1–70 (MASKPEKRVA…SPWTPPGRAA (70 aa)). Disordered regions lie at residues 43–119 (WEAP…PSEE) and 137–176 (HLSPPLPPPPPQAPAERPSVQPSPLRPMEEELPPPPAERV). Pro residues-rich tracts occupy residues 104 to 114 (FPPPPPPPPVL) and 140 to 149 (PPLPPPPPQA). Residues 150 to 159 (PAERPSVQPS) are compositionally biased toward low complexity. LIM zinc-binding domains follow at residues 183-244 (DICA…TLER), 245-302 (CGKC…RKFA), and 303-372 (PVCS…RSAA). Positions 278-375 (IGDESFALGS…HVKRSAAGCC (98 aa)) are FERMT2-binding.

As to quaternary structure, interacts with FERMT2, FLNA, FLNB and FLNC. Interacts with NKX2-5.

It is found in the cell junction. The protein localises to the focal adhesion. The protein resides in the cytoplasm. Its subcellular location is the cytoskeleton. It localises to the stress fiber. Serves as an anchoring site for cell-ECM adhesion proteins and filamin-containing actin filaments. Is implicated in cell shape modulation (spreading) and motility. May participate in the regulation of filamin-mediated cross-linking and stabilization of actin filaments. May also regulate the assembly of filamin-containing signaling complexes that control actin assembly. Promotes dissociation of FLNA from ITGB3 and ITGB7. Promotes activation of integrins and regulates integrin-mediated cell-cell adhesion. The polypeptide is Filamin-binding LIM protein 1 (FBLIM1) (Pongo abelii (Sumatran orangutan)).